Here is a 314-residue protein sequence, read N- to C-terminus: tRNA dimethylallyltransferase 1 (314 aa).

8–15 contributes to the ATP binding site; sequence GPTGSGKS. Residue 10 to 15 participates in substrate binding; it reads TGSGKS.

This sequence belongs to the IPP transferase family. Monomer. Mg(2+) is required as a cofactor.

It carries out the reaction adenosine(37) in tRNA + dimethylallyl diphosphate = N(6)-dimethylallyladenosine(37) in tRNA + diphosphate. Catalyzes the transfer of a dimethylallyl group onto the adenine at position 37 in tRNAs that read codons beginning with uridine, leading to the formation of N6-(dimethylallyl)adenosine (i(6)A). The polypeptide is tRNA dimethylallyltransferase 1 (Mycobacterium ulcerans (strain Agy99)).